The following is a 334-amino-acid chain: MENFGEGRRSGGGMLPLLALSAVAEYYRLPWKPPVTASLLAANTLVYLRPAFIDPVIPHISEVWFNPHLIFKHKDLKRLFLSAFYHVNEPHLVYNMMSLLWKGIKLETSMGSSEFASMVFTLIGMSQGVTLLLAKSLLLLFDYDRAYYNEYAVGFSGVLFAMKVVLNSQAEDYSSVYGILVPTKYAAWAELILVQMFVPNASFLGHLGGILAGIIYLKLKGSYSGSDPVTMAVRGVSRLVTWPLRFLNGMVRSRRRRITGRGRVGRGQTGIAGPGIWRCQSCTYDNSGWLSACEMCGSGRARGNGWSLNQGPALSSSNDLPLDELRRRRVERFS.

The transit peptide at 1–87 (MENFGEGRRS…RLFLSAFYHV (87 aa)) directs the protein to the mitochondrion. 4 consecutive transmembrane segments (helical) span residues 114–134 (EFAS…LLLA), 146–166 (AYYN…KVVL), 176–196 (VYGI…LVQM), and 197–217 (FVPN…IIYL). The active-site Nucleophile is serine 156. The active-site Charge relay system is the histidine 206. Residues 273–302 (GPGIWRCQSCTYDNSGWLSACEMCGSGRAR) form a RanBP2-type zinc finger.

The protein belongs to the peptidase S54 family.

Its subcellular location is the mitochondrion membrane. Its function is as follows. Probable rhomboid-type serine protease that catalyzes intramembrane proteolysis. May function in the heat-shock response pathway. The sequence is that of Rhomboid-like protein 14, mitochondrial from Arabidopsis thaliana (Mouse-ear cress).